The sequence spans 351 residues: Histidinol-phosphate aminotransferase (351 aa).

K221 is subject to N6-(pyridoxal phosphate)lysine.

The protein belongs to the class-II pyridoxal-phosphate-dependent aminotransferase family. Histidinol-phosphate aminotransferase subfamily. As to quaternary structure, homodimer. Pyridoxal 5'-phosphate is required as a cofactor.

It catalyses the reaction L-histidinol phosphate + 2-oxoglutarate = 3-(imidazol-4-yl)-2-oxopropyl phosphate + L-glutamate. It participates in amino-acid biosynthesis; L-histidine biosynthesis; L-histidine from 5-phospho-alpha-D-ribose 1-diphosphate: step 7/9. This is Histidinol-phosphate aminotransferase from Staphylococcus saprophyticus subsp. saprophyticus (strain ATCC 15305 / DSM 20229 / NCIMB 8711 / NCTC 7292 / S-41).